Consider the following 365-residue polypeptide: Phosphoserine aminotransferase (365 aa).

Arg-46 lines the L-glutamate pocket. Pyridoxal 5'-phosphate contacts are provided by residues 80–81 (AT), Trp-106, Thr-157, Asp-177, and Gln-200. Residue Lys-201 is modified to N6-(pyridoxal phosphate)lysine. Position 242 to 243 (242 to 243 (NT)) interacts with pyridoxal 5'-phosphate.

It belongs to the class-V pyridoxal-phosphate-dependent aminotransferase family. SerC subfamily. Homodimer. The cofactor is pyridoxal 5'-phosphate.

It localises to the cytoplasm. It catalyses the reaction O-phospho-L-serine + 2-oxoglutarate = 3-phosphooxypyruvate + L-glutamate. It carries out the reaction 4-(phosphooxy)-L-threonine + 2-oxoglutarate = (R)-3-hydroxy-2-oxo-4-phosphooxybutanoate + L-glutamate. The protein operates within amino-acid biosynthesis; L-serine biosynthesis; L-serine from 3-phospho-D-glycerate: step 2/3. Its pathway is cofactor biosynthesis; pyridoxine 5'-phosphate biosynthesis; pyridoxine 5'-phosphate from D-erythrose 4-phosphate: step 3/5. Catalyzes the reversible conversion of 3-phosphohydroxypyruvate to phosphoserine and of 3-hydroxy-2-oxo-4-phosphonooxybutanoate to phosphohydroxythreonine. This chain is Phosphoserine aminotransferase, found in Leptospira biflexa serovar Patoc (strain Patoc 1 / Ames).